Reading from the N-terminus, the 200-residue chain is 3-isopropylmalate dehydratase small subunit (200 aa).

The protein belongs to the LeuD family. LeuD type 1 subfamily. As to quaternary structure, heterodimer of LeuC and LeuD.

It catalyses the reaction (2R,3S)-3-isopropylmalate = (2S)-2-isopropylmalate. It functions in the pathway amino-acid biosynthesis; L-leucine biosynthesis; L-leucine from 3-methyl-2-oxobutanoate: step 2/4. Its function is as follows. Catalyzes the isomerization between 2-isopropylmalate and 3-isopropylmalate, via the formation of 2-isopropylmaleate. The polypeptide is 3-isopropylmalate dehydratase small subunit (Actinobacillus succinogenes (strain ATCC 55618 / DSM 22257 / CCUG 43843 / 130Z)).